The following is a 114-amino-acid chain: Large ribosomal subunit protein bL19 (114 aa).

This sequence belongs to the bacterial ribosomal protein bL19 family.

In terms of biological role, this protein is located at the 30S-50S ribosomal subunit interface and may play a role in the structure and function of the aminoacyl-tRNA binding site. The polypeptide is Large ribosomal subunit protein bL19 (Lysinibacillus sphaericus (strain C3-41)).